A 153-amino-acid polypeptide reads, in one-letter code: UPF0266 membrane protein YE1773 (153 aa).

The next 3 membrane-spanning stretches (helical) occupy residues I6 to M26, I45 to N65, and E67 to I87.

Belongs to the UPF0266 family.

Its subcellular location is the cell inner membrane. This chain is UPF0266 membrane protein YE1773, found in Yersinia enterocolitica serotype O:8 / biotype 1B (strain NCTC 13174 / 8081).